A 60-amino-acid chain; its full sequence is Putative transcriptional regulator XtpA (60 aa).

In terms of biological role, controls the expression of small non-coding RNA GcvB, which represses the expression of many amino acid transporter proteins and uptake of aminoglycoside antibiotics in cells. Might be a transcriptional activator. An RNA (xtr) with a tRNA-like fold possibly derived from tRNA-Arg(UCG) is encoded entirely within the protein; xtr does not have the sequence corresponding to tRNA anticodon or variable arms. 10 synonymous codon changes in the xtr region of xtpA have the same phenotype as a deletion mutation, suggesting the mRNA secondary structure is important for function. This is Putative transcriptional regulator XtpA from Escherichia coli (strain K12).